A 725-amino-acid polypeptide reads, in one-letter code: Prolyl 3-hydroxylase 1 (725 aa).

The signal sequence occupies residues 1–14 (MALLLPLLPLLVWA). The TPR 1 repeat unit spans residues 36–69 (PDALFAAGAEAYARGDWPAVVLQMERALRARAAI). N-linked (GlcNAc...) asparagine glycosylation occurs at Asn-82. 3 TPR repeats span residues 136–169 (RSPY…NPEH), 198–231 (HMTE…YFVA), and 294–327 (PSHF…FPND). Residues 394–441 (KRLREKQKVERETAARISEEIGNLMKEIETLVEEKAKESAEMSKFIRE) are a coiled coil. Asn-460 and Asn-533 each carry an N-linked (GlcNAc...) asparagine glycan. Positions 557-671 (SHLVCRTAID…RCAIALWFTL (115 aa)) constitute a Fe2OG dioxygenase domain. Fe cation contacts are provided by His-580, Asp-582, and His-652. Arg-662 is a catalytic residue. Residues 701–715 (ETSAEQEPTAATSTA) show a composition bias toward polar residues. The tract at residues 701 to 725 (ETSAEQEPTAATSTAGLHAAGKDEL) is disordered. Positions 722–725 (KDEL) match the Prevents secretion from ER motif.

The protein belongs to the leprecan family. In terms of assembly, binds unfolded collagen in a complex with CYPB and CRTAP. Requires Fe cation as cofactor. The cofactor is L-ascorbate. Expressed in embryonic dermis, tendon, cartilage, liver and kidney. Expression in the kidney is restricted to the calyx. In the liver, expression is restricted to the interlobular septum.

The protein resides in the endoplasmic reticulum. It carries out the reaction L-prolyl-[collagen] + 2-oxoglutarate + O2 = trans-3-hydroxy-L-prolyl-[collagen] + succinate + CO2. Has prolyl 3-hydroxylase activity catalyzing the post-translational formation of 3-hydroxyproline in -Xaa-Pro-Gly-sequences in collagens, especially types IV and V. May be involved in the secretoty pathway of cells. Has growth suppressive activity in fibroblasts. In Gallus gallus (Chicken), this protein is Prolyl 3-hydroxylase 1.